We begin with the raw amino-acid sequence, 537 residues long: Cytoplasmic dynein 2 intermediate chain 2 (537 aa).

Phosphoserine is present on serine 15. Residues arginine 80 to glutamate 93 are DYNLL2 binding. The DYNLRB1 binding stretch occupies residues leucine 107–alanine 132. WD repeat units follow at residues glutamate 216–leucine 256, threonine 265–leucine 309, proline 391–serine 431, leucine 434–threonine 474, and glutamine 481–glycine 521.

This sequence belongs to the dynein light intermediate chain family. As to quaternary structure, the cytoplasmic dynein 2 complex consists of two catalytic heavy chains (HCs) and a number of non-catalytic subunits presented by intermediate chains (ICs), light intermediate chains (LICs) and light chains (LCs). Among them, a heavy chain (DYNC2H1), two intermediate chains (DYNC2I2 and DYNC2I1), a light intermediate chain (DYNC2LI1), and a light chain (DYNLT2B) are unique to the cytoplasmic dynein complex 2, but a subset of the light chains are also shared by dynein-1 and dynein-2 complexes. Interacts with DYNC2I1; their C-terminal domains each bind a copy of the heavy chain, and their extended N-terminal regions are held together by an array of light chain dimers. Interacts with DYNLL2; this interaction is essential for dynein-2-mediated retrograde trafficking of ciliary proteins. Interacts with DYNLRB1; this interaction is essential for dynein-2-mediated retrograde trafficking of ciliary proteins. Interacts (via the WD domains) with MAP3K7 and TAB3. Interacts (via WD domains) with TAB2 (via C-terminus). Interacts (via WD domains) with TRAF6 (via TRAF-type domains). As to expression, expressed in brain, thymus, heart, lung, liver, spleen, kidney, testis and intestine.

It localises to the cytoplasm. The protein resides in the cytoskeleton. The protein localises to the cilium basal body. It is found in the cilium axoneme. Its subcellular location is the cell projection. It localises to the cilium. The protein resides in the microtubule organizing center. The protein localises to the centrosome. It is found in the filopodium. In terms of biological role, acts as one of several non-catalytic accessory components of the cytoplasmic dynein 2 complex (dynein-2 complex), a motor protein complex that drives the movement of cargos along microtubules within cilia and flagella in concert with the intraflagellar transport (IFT) system. DYNC2I2 plays a major role in retrograde ciliary protein trafficking and in ciliogenesis. Required also to maintain a functional transition zone. Functionally, acts as a negative regulator of the Toll-like and IL-1R receptor signaling pathways. Inhibits the MAP3K7-induced NF-kappa-B activation pathway. Inhibits MAP3K7 phosphorylation at 'Thr-184' and 'Thr-187' upon Il-1 beta stimulation. This Mus musculus (Mouse) protein is Cytoplasmic dynein 2 intermediate chain 2 (Dync2i2).